A 426-amino-acid chain; its full sequence is Serine--tRNA ligase (426 aa).

235–237 (TAE) contributes to the L-serine binding site. Residue 266 to 268 (RRE) participates in ATP binding. E289 lines the L-serine pocket. Position 353–356 (353–356 (EISS)) interacts with ATP. Residue S389 coordinates L-serine.

Belongs to the class-II aminoacyl-tRNA synthetase family. Type-1 seryl-tRNA synthetase subfamily. In terms of assembly, homodimer. The tRNA molecule binds across the dimer.

The protein resides in the cytoplasm. The catalysed reaction is tRNA(Ser) + L-serine + ATP = L-seryl-tRNA(Ser) + AMP + diphosphate + H(+). The enzyme catalyses tRNA(Sec) + L-serine + ATP = L-seryl-tRNA(Sec) + AMP + diphosphate + H(+). The protein operates within aminoacyl-tRNA biosynthesis; selenocysteinyl-tRNA(Sec) biosynthesis; L-seryl-tRNA(Sec) from L-serine and tRNA(Sec): step 1/1. Functionally, catalyzes the attachment of serine to tRNA(Ser). Is also able to aminoacylate tRNA(Sec) with serine, to form the misacylated tRNA L-seryl-tRNA(Sec), which will be further converted into selenocysteinyl-tRNA(Sec). The sequence is that of Serine--tRNA ligase from Nostoc punctiforme (strain ATCC 29133 / PCC 73102).